Here is a 465-residue protein sequence, read N- to C-terminus: Cysteine--tRNA ligase (465 aa).

Cys27 provides a ligand contact to Zn(2+). Residues 29–39 (PTVYNFFHIGN) carry the 'HIGH' region motif. The Zn(2+) site is built by Cys207, His232, and Glu236. A 'KMSKS' region motif is present at residues 264-268 (KMSKS). Lys267 is an ATP binding site.

It belongs to the class-I aminoacyl-tRNA synthetase family. As to quaternary structure, monomer. Zn(2+) is required as a cofactor.

It localises to the cytoplasm. The enzyme catalyses tRNA(Cys) + L-cysteine + ATP = L-cysteinyl-tRNA(Cys) + AMP + diphosphate. The sequence is that of Cysteine--tRNA ligase from Clostridium botulinum (strain Okra / Type B1).